A 213-amino-acid chain; its full sequence is Transcription antitermination protein NusB (213 aa).

Belongs to the NusB family.

Its function is as follows. Involved in transcription antitermination. Required for transcription of ribosomal RNA (rRNA) genes. Binds specifically to the boxA antiterminator sequence of the ribosomal RNA (rrn) operons. The protein is Transcription antitermination protein NusB of Nostoc punctiforme (strain ATCC 29133 / PCC 73102).